A 29-amino-acid chain; its full sequence is Frontoxin VI (29 aa).

A disulfide bridge links Cys3 with Cys24.

As to expression, expressed by the venom gland.

The protein resides in the secreted. Its function is as follows. Binds to muscle nicotinic acetylcholine receptor (nAChR) and inhibit acetylcholine from binding to the receptor, thereby impairing neuromuscular transmission. This Micrurus frontalis (Coral snake) protein is Frontoxin VI.